Consider the following 121-residue polypeptide: ORF8 protein (121 aa).

Residues 1–15 (MKFLVFLGIITTVAA) form the signal peptide. The SARS ORF8 Ig-like domain occupies 19 to 121 (ECSLQSCTQH…HDVRVVLDFI (103 aa)). 3 disulfide bridges follow: Cys25–Cys90, Cys37–Cys102, and Cys61–Cys83. Asn78 carries N-linked (GlcNAc...) (complex) asparagine; by host glycosylation.

As to quaternary structure, homodimer. Interacts with host IL17RA. Interacts with host IL17RC. Interacts with host MHC-I. Glycosylated by the host when secreted via the conventional pathway. The glycosylated form cannot bind IL17A and would not participate in the cytokine storm.

It is found in the secreted. Plays a role in modulating the host immune response. May act as a secreted virokine by mimicking interleukin-17A (IL17A), and thereby binding to the IL17RA receptor, leading to activation of the IL17 pathway and increased secretion of pro-inflammatory factors. Contributes to the cytokine storm during SARS-CoV-2 infection when secreted by unconventional pathway. May act by down-regulating major histocompability complex class I (MHC-I) at cell surface. May inhibit expression of some members of the IFN-stimulated gene (ISG) family including hosts IGF2BP1/ZBP1, MX1 and MX2, and DHX58. The protein is ORF8 protein of Severe acute respiratory syndrome coronavirus 2 (2019-nCoV).